A 376-amino-acid chain; its full sequence is 3-dehydroquinate synthase (376 aa).

NAD(+) contacts are provided by residues 115 to 119, 139 to 140, Lys-152, and Lys-161; these read GVIGD and TS. Zn(2+)-binding residues include Glu-194, His-256, and His-275.

The protein belongs to the sugar phosphate cyclases superfamily. Dehydroquinate synthase family. Co(2+) serves as cofactor. Requires Zn(2+) as cofactor. It depends on NAD(+) as a cofactor.

It is found in the cytoplasm. The enzyme catalyses 7-phospho-2-dehydro-3-deoxy-D-arabino-heptonate = 3-dehydroquinate + phosphate. It participates in metabolic intermediate biosynthesis; chorismate biosynthesis; chorismate from D-erythrose 4-phosphate and phosphoenolpyruvate: step 2/7. Its function is as follows. Catalyzes the conversion of 3-deoxy-D-arabino-heptulosonate 7-phosphate (DAHP) to dehydroquinate (DHQ). This is 3-dehydroquinate synthase from Rhizobium johnstonii (strain DSM 114642 / LMG 32736 / 3841) (Rhizobium leguminosarum bv. viciae).